Reading from the N-terminus, the 869-residue chain is Protein translocase subunit SecA (869 aa).

ATP contacts are provided by residues Q85, 103–107 (GEGKT), and D508.

The protein belongs to the SecA family. In terms of assembly, monomer and homodimer. Part of the essential Sec protein translocation apparatus which comprises SecA, SecYEG and auxiliary proteins SecDF. Other proteins may also be involved.

The protein resides in the cell membrane. The protein localises to the cytoplasm. The catalysed reaction is ATP + H2O + cellular proteinSide 1 = ADP + phosphate + cellular proteinSide 2.. In terms of biological role, part of the Sec protein translocase complex. Interacts with the SecYEG preprotein conducting channel. Has a central role in coupling the hydrolysis of ATP to the transfer of proteins into and across the cell membrane, serving as an ATP-driven molecular motor driving the stepwise translocation of polypeptide chains across the membrane. In Deinococcus geothermalis (strain DSM 11300 / CIP 105573 / AG-3a), this protein is Protein translocase subunit SecA.